The sequence spans 306 residues: D-alanine--D-alanine ligase (306 aa).

In terms of domain architecture, ATP-grasp spans 107 to 300 (KAAYRTAGLP…FGQLCAWLVE (194 aa)). 134 to 184 (IAPPYVVKPNNEGSSVGIYIVHEATNSPPQLSEEMPAQVMVEAYAPGREMT) provides a ligand contact to ATP. Mg(2+) contacts are provided by aspartate 251, glutamate 267, and asparagine 269.

This sequence belongs to the D-alanine--D-alanine ligase family. The cofactor is Mg(2+). Mn(2+) is required as a cofactor.

It is found in the cytoplasm. It catalyses the reaction 2 D-alanine + ATP = D-alanyl-D-alanine + ADP + phosphate + H(+). Its pathway is cell wall biogenesis; peptidoglycan biosynthesis. Cell wall formation. The sequence is that of D-alanine--D-alanine ligase from Ruegeria sp. (strain TM1040) (Silicibacter sp.).